The chain runs to 60 residues: Toxin C10S2C2 (60 aa).

4 disulfides stabilise this stretch: cysteine 3–cysteine 22, cysteine 17–cysteine 39, cysteine 41–cysteine 52, and cysteine 53–cysteine 58. The interval 41–48 (CPTAMWPY) is important for binding to L-type calcium channels.

This sequence belongs to the three-finger toxin family. Short-chain subfamily. L-type calcium blocker sub-subfamily. As to expression, expressed by the venom gland.

Its subcellular location is the secreted. This specific blocker of the L-type calcium channel (Cav1/CACNA1) is a smooth muscle relaxant and an inhibitor of cardiac contractions. The chain is Toxin C10S2C2 from Dendroaspis angusticeps (Eastern green mamba).